We begin with the raw amino-acid sequence, 372 residues long: Fatty acid 2-hydroxylase (372 aa).

In terms of domain architecture, Cytochrome b5 heme-binding spans 8–86 (AASFTPAEVQ…LEQYYVGELR (79 aa)). Positions 43 and 69 each coordinate heme. A run of 2 helical transmembrane segments spans residues 168-188 (VWYS…WSYY) and 213-233 (SVFI…EYVI). Positions 219–361 (FVLGMLFWTF…TKLWDYFFHT (143 aa)) constitute a Fatty acid hydroxylase domain. 5 residues coordinate Zn(2+): histidine 234, histidine 239, histidine 257, histidine 260, and histidine 261. Helical transmembrane passes span 268–288 (SRLV…YVFL) and 290–310 (LILP…GYVL). Positions 315, 319, 336, 339, and 340 each coordinate Zn(2+).

Belongs to the sterol desaturase family. SCS7 subfamily. The cofactor is Zn(2+). Expressed in brain (at protein level). Detected in cerebellum and forebrain. Expression in the white matter is mainly restricted in oligodendrocytes. Expressed in stomach, kidney, skin and testis. Expressed in sebaceous gland.

The protein localises to the endoplasmic reticulum membrane. It is found in the microsome membrane. The enzyme catalyses a 1,2-saturated fatty acid + 2 Fe(II)-[cytochrome b5] + O2 + 2 H(+) = a (R)-2-hydroxy fatty acid + 2 Fe(III)-[cytochrome b5] + H2O. It carries out the reaction hexadecanoate + 2 Fe(II)-[cytochrome b5] + O2 + 2 H(+) = (R)-2-hydroxyhexadecanoate + 2 Fe(III)-[cytochrome b5] + H2O. It catalyses the reaction octadecanoate + 2 Fe(II)-[cytochrome b5] + O2 + 2 H(+) = (R)-2-hydroxyoctadecanoate + 2 Fe(III)-[cytochrome b5] + H2O. The catalysed reaction is docosanoate + 2 Fe(II)-[cytochrome b5] + O2 + 2 H(+) = 2-hydroxydocosanoate + 2 Fe(III)-[cytochrome b5] + H2O. The enzyme catalyses tetracosanoate + 2 Fe(II)-[cytochrome b5] + O2 + 2 H(+) = (R)-2-hydroxytetracosanoate + 2 Fe(III)-[cytochrome b5] + H2O. The protein operates within sphingolipid metabolism; galactosylceramide biosynthesis. It participates in lipid metabolism; fatty acid metabolism. Its function is as follows. Catalyzes the hydroxylation of free fatty acids at the C-2 position to produce 2-hydroxy fatty acids, which are building blocks of sphingolipids and glycosphingolipids common in neural tissue and epidermis. FA2H is stereospecific for the production of (R)-2-hydroxy fatty acids. Plays an essential role in the synthesis of galactosphingolipids of the myelin sheath. Responsible for the synthesis of sphingolipids and glycosphingolipids involved in the formation of epidermal lamellar bodies critical for skin permeability barrier. Participates in the synthesis of glycosphingolipids and a fraction of type II wax diesters in sebaceous gland, specifically regulating hair follicle homeostasis. Involved in the synthesis of sphingolipids of plasma membrane rafts, controlling lipid raft mobility and trafficking of raft-associated proteins. The chain is Fatty acid 2-hydroxylase from Mus musculus (Mouse).